The sequence spans 469 residues: Diaminobutyrate--2-oxoglutarate transaminase (469 aa).

At lysine 290 the chain carries N6-(pyridoxal phosphate)lysine.

It belongs to the class-III pyridoxal-phosphate-dependent aminotransferase family. The cofactor is pyridoxal 5'-phosphate.

The protein resides in the cytoplasm. The enzyme catalyses L-2,4-diaminobutanoate + 2-oxoglutarate = L-aspartate 4-semialdehyde + L-glutamate. In terms of biological role, involved in the degradation of ectoine, which allows H.elongata to utilize ectoine as both a carbon and a nitrogen source for growth. Probably catalyzes the conversion of L-2,4-diaminobutyrate (DABA) to L-aspartate beta-semialdehyde (ASA) by transamination with 2-oxoglutarate. This is Diaminobutyrate--2-oxoglutarate transaminase from Halomonas elongata (strain ATCC 33173 / DSM 2581 / NBRC 15536 / NCIMB 2198 / 1H9).